Here is a 382-residue protein sequence, read N- to C-terminus: GDP-mannose 4,6 dehydratase 2 (382 aa).

Residues 40-45 (GITGQD), 97-98 (DM), 119-123 (LAAQS), and Y134 contribute to the NADP(+) site. Residue T166 is part of the active site. Residues E168 and Y190 each act as nucleophile in the active site. Residues K194, H220, and R225 each contribute to the NADP(+) site.

This sequence belongs to the NAD(P)-dependent epimerase/dehydratase family. GDP-mannose 4,6-dehydratase subfamily. The cofactor is NADP(+).

The enzyme catalyses GDP-alpha-D-mannose = GDP-4-dehydro-alpha-D-rhamnose + H2O. The protein operates within nucleotide-sugar biosynthesis; GDP-L-fucose biosynthesis via de novo pathway; GDP-L-fucose from GDP-alpha-D-mannose: step 1/2. Catalyzes the conversion of GDP-D-mannose to GDP-4-dehydro-6-deoxy-D-mannose. This is GDP-mannose 4,6 dehydratase 2 (gmd-2) from Caenorhabditis elegans.